We begin with the raw amino-acid sequence, 419 residues long: Serine hydroxymethyltransferase (419 aa).

(6S)-5,6,7,8-tetrahydrofolate is bound by residues L121 and 125 to 127; that span reads GHL. The residue at position 230 (K230) is an N6-(pyridoxal phosphate)lysine. (6S)-5,6,7,8-tetrahydrofolate is bound at residue 355–357; that stretch reads SPF.

Belongs to the SHMT family. Homodimer. Requires pyridoxal 5'-phosphate as cofactor.

The protein localises to the cytoplasm. The catalysed reaction is (6R)-5,10-methylene-5,6,7,8-tetrahydrofolate + glycine + H2O = (6S)-5,6,7,8-tetrahydrofolate + L-serine. The protein operates within one-carbon metabolism; tetrahydrofolate interconversion. Its pathway is amino-acid biosynthesis; glycine biosynthesis; glycine from L-serine: step 1/1. In terms of biological role, catalyzes the reversible interconversion of serine and glycine with tetrahydrofolate (THF) serving as the one-carbon carrier. This reaction serves as the major source of one-carbon groups required for the biosynthesis of purines, thymidylate, methionine, and other important biomolecules. Also exhibits THF-independent aldolase activity toward beta-hydroxyamino acids, producing glycine and aldehydes, via a retro-aldol mechanism. This chain is Serine hydroxymethyltransferase, found in Streptococcus equi subsp. zooepidemicus (strain MGCS10565).